The chain runs to 116 residues: Transcriptional regulator WhiB4 (116 aa).

A 4Fe-4S Wbl-type domain is found at 36 to 92 (LCRATDPDELFVRGAAQRKAAVICRHCPVMQECGADALDNKVEFGVWGGMTERQRRA). The [4Fe-4S] cluster site is built by Cys37, Cys59, Cys62, and Cys68.

The protein belongs to the WhiB family. [4Fe-4S] cluster is required as a cofactor. The Fe-S cluster can be nitrosylated by nitric oxide (NO). In terms of processing, upon Fe-S cluster removal intramolecular disulfide bonds are formed.

It is found in the cytoplasm. In terms of biological role, acts as a transcriptional regulator. Probably redox-responsive. The apo- but not holo-form probably binds DNA. Plays a role in lipooligosaccharide (LOS) biosynthesis by regulating LOS gene expression. The polypeptide is Transcriptional regulator WhiB4 (whiB4) (Mycobacterium marinum (strain ATCC BAA-535 / M)).